The sequence spans 178 residues: ATP synthase subunit b (178 aa).

The chain crosses the membrane as a helical span at residues 11–31; sequence IIPEPVEIVVGLVAFLLLLFV.

This sequence belongs to the ATPase B chain family. As to quaternary structure, F-type ATPases have 2 components, F(1) - the catalytic core - and F(0) - the membrane proton channel. F(1) has five subunits: alpha(3), beta(3), gamma(1), delta(1), epsilon(1). F(0) has three main subunits: a(1), b(2) and c(10-14). The alpha and beta chains form an alternating ring which encloses part of the gamma chain. F(1) is attached to F(0) by a central stalk formed by the gamma and epsilon chains, while a peripheral stalk is formed by the delta and b chains.

It is found in the cell membrane. In terms of biological role, f(1)F(0) ATP synthase produces ATP from ADP in the presence of a proton or sodium gradient. F-type ATPases consist of two structural domains, F(1) containing the extramembraneous catalytic core and F(0) containing the membrane proton channel, linked together by a central stalk and a peripheral stalk. During catalysis, ATP synthesis in the catalytic domain of F(1) is coupled via a rotary mechanism of the central stalk subunits to proton translocation. Component of the F(0) channel, it forms part of the peripheral stalk, linking F(1) to F(0). This chain is ATP synthase subunit b, found in Saccharopolyspora erythraea (strain ATCC 11635 / DSM 40517 / JCM 4748 / NBRC 13426 / NCIMB 8594 / NRRL 2338).